The following is a 1194-amino-acid chain: Probable disease resistance protein RPP1 (1194 aa).

The segment at 1 to 27 (MGSVMSLGCSKRKATNQDVDSESRKRR) is disordered. Residues 96-260 (WKHDVFPSFH…KISTDVSNML (165 aa)) form the TIR domain. Position 105 to 110 (105 to 110 (HGADVR)) interacts with NAD(+). The active site involves Glu171. The 256-residue stretch at 280–535 (DMLEQLLRLD…ACLFNGESTT (256 aa)) folds into the NB-ARC domain. 14 LRR repeats span residues 623 to 647 (LSNT…HFVR), 658 to 681 (QLAL…GYES), 690 to 713 (PEFL…TKQL), 714 to 737 (RNLK…STAT), 739 to 760 (LEEL…IEKL), 761 to 784 (TSLQ…ENAT), 786 to 807 (LREL…IGTA), 808 to 831 (TNLK…IGDI), 832 to 855 (TDLE…IGNL), 866 to 878 (CSKL…NINL), 879 to 899 (KSLD…PEIS), 900 to 922 (THIS…IMSW), 943 to 965 (FDII…VKRM), and 966 to 991 (SRLR…SLDY). Residues 1170-1194 (RRSSSPDLSPESSRVSSYDHCLRGD) form a disordered region. Residues 1171 to 1185 (RSSSPDLSPESSRVS) show a composition bias toward low complexity.

It belongs to the disease resistance TIR-NB-LRR family.

It catalyses the reaction NAD(+) + H2O = ADP-D-ribose + nicotinamide + H(+). TIR-NB-LRR receptor-like protein that confers resistance to the pathogen Hyaloperonospora arabidopsis. Probably acts as a NAD(+) hydrolase (NADase): in response to activation, catalyzes cleavage of NAD(+) into ADP-D-ribose (ADPR) and nicotinamide; NAD(+) cleavage triggering a defense system that promotes cell death. This is Probable disease resistance protein RPP1 from Arabidopsis thaliana (Mouse-ear cress).